The following is a 565-amino-acid chain: Tetratricopeptide repeat protein 39A (565 aa).

TPR repeat units follow at residues 271 to 304 (AIFL…QQVW), 461 to 494 (CLIQ…EKKL), and 502 to 535 (PNAL…YKVY).

Belongs to the TTC39 family.

This chain is Tetratricopeptide repeat protein 39A (ttc39a), found in Danio rerio (Zebrafish).